The primary structure comprises 115 residues: Nucleoid-associated protein Rpic_1036 (115 aa).

This sequence belongs to the YbaB/EbfC family. In terms of assembly, homodimer.

It localises to the cytoplasm. The protein resides in the nucleoid. Binds to DNA and alters its conformation. May be involved in regulation of gene expression, nucleoid organization and DNA protection. This chain is Nucleoid-associated protein Rpic_1036, found in Ralstonia pickettii (strain 12J).